We begin with the raw amino-acid sequence, 83 residues long: Normal mucosa of esophagus-specific gene 1 protein (83 aa).

It belongs to the complex I NDUFA4 subunit family. In terms of tissue distribution, expressed mainly in stomach, placenta, small intestine and colon, as well as in normal mucosa of esophagus. Down-regulated in esophageal squamous cell carcinoma.

The protein resides in the nucleus. The protein is Normal mucosa of esophagus-specific gene 1 protein (NMES1) of Homo sapiens (Human).